The following is a 267-amino-acid chain: L-aspartate dehydrogenase (267 aa).

Positions 124 and 190 each coordinate NAD(+). The active site involves His-218.

Belongs to the L-aspartate dehydrogenase family.

It catalyses the reaction L-aspartate + NADP(+) + H2O = oxaloacetate + NH4(+) + NADPH + H(+). The catalysed reaction is L-aspartate + NAD(+) + H2O = oxaloacetate + NH4(+) + NADH + H(+). The protein operates within cofactor biosynthesis; NAD(+) biosynthesis; iminoaspartate from L-aspartate (dehydrogenase route): step 1/1. Its function is as follows. Specifically catalyzes the NAD or NADP-dependent dehydrogenation of L-aspartate to iminoaspartate. The polypeptide is L-aspartate dehydrogenase (Methanococcus maripaludis (strain C6 / ATCC BAA-1332)).